Consider the following 522-residue polypeptide: Terpineol synthase, chloroplastic (522 aa).

Arg-242, Asp-279, Asp-283, Arg-414, and Asn-417 together coordinate (2E)-geranyl diphosphate. Asp-279 and Asp-283 together coordinate Mg(2+). The DDXXD motif motif lies at 279 to 283 (DDVYD). 3 residues coordinate Mg(2+): Asn-417, Thr-421, and Glu-425.

The protein belongs to the terpene synthase family. Tpsb subfamily. As to quaternary structure, monomer. Mg(2+) is required as a cofactor. Mn(2+) serves as cofactor. Confined to flowers.

Its subcellular location is the plastid. The protein localises to the chloroplast. The enzyme catalyses (2E)-geranyl diphosphate + H2O = (S)-alpha-terpineol + diphosphate. It carries out the reaction (2E)-geranyl diphosphate = sabinene + diphosphate. It catalyses the reaction (2E)-geranyl diphosphate = beta-myrcene + diphosphate. The catalysed reaction is (2E)-geranyl diphosphate = limonene + diphosphate. The enzyme catalyses (2E)-geranyl diphosphate + H2O = 1,8-cineole + diphosphate. It carries out the reaction (2E)-geranyl diphosphate = alpha-pinene + diphosphate. It participates in secondary metabolite biosynthesis; terpenoid biosynthesis. Functionally, monoterpene synthase (TPS) involved in the biosynthesis of monoterpene natural products of the 'cineole cassette', volatile compounds present in floral scent. Catalyzes the conversion of (2E)-geranyl diphosphate (GPP) into alpha-terpineol and, as minor products, sabinene, beta-myrcene, limonene, alpha-pinene and 1,8-cineole. The protein is Terpineol synthase, chloroplastic of Nicotiana langsdorffii (Langsdorff's tobacco).